We begin with the raw amino-acid sequence, 474 residues long: UDP-N-acetylmuramoylalanine--D-glutamate ligase (474 aa).

An ATP-binding site is contributed by 134 to 140 (GSNGKST).

It belongs to the MurCDEF family.

Its subcellular location is the cytoplasm. The catalysed reaction is UDP-N-acetyl-alpha-D-muramoyl-L-alanine + D-glutamate + ATP = UDP-N-acetyl-alpha-D-muramoyl-L-alanyl-D-glutamate + ADP + phosphate + H(+). Its pathway is cell wall biogenesis; peptidoglycan biosynthesis. Functionally, cell wall formation. Catalyzes the addition of glutamate to the nucleotide precursor UDP-N-acetylmuramoyl-L-alanine (UMA). The sequence is that of UDP-N-acetylmuramoylalanine--D-glutamate ligase from Thiobacillus denitrificans (strain ATCC 25259 / T1).